A 620-amino-acid chain; its full sequence is Chaperone protein HscA homolog (620 aa).

The protein belongs to the heat shock protein 70 family.

Its function is as follows. Chaperone involved in the maturation of iron-sulfur cluster-containing proteins. Has a low intrinsic ATPase activity which is markedly stimulated by HscB. This is Chaperone protein HscA homolog from Bordetella petrii (strain ATCC BAA-461 / DSM 12804 / CCUG 43448).